The sequence spans 108 residues: Signal recognition particle 19 kDa protein (108 aa).

This sequence belongs to the SRP19 family. Part of the signal recognition particle protein translocation system, which is composed of SRP and FtsY. Archaeal SRP consists of a 7S RNA molecule of 300 nucleotides and two protein subunits: SRP54 and SRP19.

It is found in the cytoplasm. Its function is as follows. Involved in targeting and insertion of nascent membrane proteins into the cytoplasmic membrane. Binds directly to 7S RNA and mediates binding of the 54 kDa subunit of the SRP. The protein is Signal recognition particle 19 kDa protein of Thermococcus kodakarensis (strain ATCC BAA-918 / JCM 12380 / KOD1) (Pyrococcus kodakaraensis (strain KOD1)).